Consider the following 107-residue polypeptide: UPF0145 protein TT_C0892 (107 aa).

Belongs to the UPF0145 family.

This Thermus thermophilus (strain ATCC BAA-163 / DSM 7039 / HB27) protein is UPF0145 protein TT_C0892.